Consider the following 326-residue polypeptide: Heterodimeric geranylgeranyl pyrophosphate synthase small subunit, chloroplastic (326 aa).

The transit peptide at Met1–Arg33 directs the protein to the chloroplast. Lys88 and His120 together coordinate isopentenyl diphosphate. Mg(2+) is bound by residues Asp127 and Asp133. Arg138 contacts dimethylallyl diphosphate. Position 139 (Arg139) interacts with isopentenyl diphosphate. Residues Lys220 and Gln258 each coordinate dimethylallyl diphosphate. The stretch at Gly274 to Tyr301 forms a coiled coil.

Belongs to the FPP/GGPP synthase family. Part of a heterodimeric geranyl(geranyl)diphosphate synthase. Interacts with GGPPS1 or GGPPS2, but not with GGPPS9. Interacts with LIL3.1 and LIL3.2. The cofactor is Mg(2+). Expressed ubiquitously.

The protein localises to the plastid. Its subcellular location is the chloroplast thylakoid membrane. Its function is as follows. Heterodimeric geranyl(geranyl)-diphosphate (GPP) synthase small subunit. The small subunit alone is inactive in vitro while the large subunit GGPPS1 catalyzes mainly the production of geranygeranyl-diphosphate in vitro. Upon association of the two subunits, the product profile changes and the production of gerany-diphosphate is strongly increased. The polypeptide is Heterodimeric geranylgeranyl pyrophosphate synthase small subunit, chloroplastic (GGR) (Arabidopsis thaliana (Mouse-ear cress)).